Reading from the N-terminus, the 266-residue chain is Gap junction beta-4 protein (266 aa).

An intramembrane segment occupies 2–13 (NWAFLQGLLSGV). The Cytoplasmic segment spans residues 14-20 (NKYSTVL). A helical transmembrane segment spans residues 21–40 (SRIWLSVVFIFRVLVYVVAA). Residues 41 to 73 (EEVWDDEQKDFVCNTKQPGCPNVCYDEFFPVSH) are Extracellular-facing. 3 cysteine pairs are disulfide-bonded: cysteine 53–cysteine 175, cysteine 60–cysteine 169, and cysteine 64–cysteine 164. The chain crosses the membrane as a helical span at residues 74 to 94 (VRLWALQLILVTCPSLLVVMH). At 95–130 (VAYREERERKHHLKHGPNAPSLYDNLSKKRGGLWWT) the chain is on the cytoplasmic side. The helical transmembrane segment at 131–151 (YLLSLIFKAAVDAGFLYIFHR) threads the bilayer. Topologically, residues 152 to 184 (LYKDYDMPRVVACSVEPCPHTVDCYISRPTEKK) are extracellular. The helical transmembrane segment at 185–205 (VFTYFMVTTAAICILLNLSEV) threads the bilayer. Topologically, residues 206–266 (FYLVGKRCME…SAPVDAGGYP (61 aa)) are cytoplasmic.

This sequence belongs to the connexin family. Beta-type (group I) subfamily. In terms of assembly, a hemichannel or connexon is composed of a hexamer of connexins. A functional gap junction is formed by the apposition of two hemichannels. Forms heteromeric channels with GJB2.

The protein resides in the cell membrane. The protein localises to the cell junction. It localises to the gap junction. Functionally, structural component of gap junctions. Gap junctions are dodecameric channels that connect the cytoplasm of adjoining cells. They are formed by the docking of two hexameric hemichannels, one from each cell membrane. Small molecules and ions diffuse from one cell to a neighboring cell via the central pore. The chain is Gap junction beta-4 protein (GJB4) from Homo sapiens (Human).